Here is a 113-residue protein sequence, read N- to C-terminus: MESLLNRLYDALGLDAPEDEPLLIIDDGIQVYFNESDHTLEMCCPFMPLPDDILTLQHFLRLNYTSAVTIGADADNTALVALYRLPQTSTEEEALTGFELFISNVKQLKEHYA.

It belongs to the IpgE/SigE chaperone family. Homodimer or higher-order oligomers.

The protein localises to the cytoplasm. In terms of biological role, molecular chaperone required for SopB/SigD stabilization and secretion. This is Chaperone protein SigE (sigE) from Salmonella paratyphi A (strain ATCC 9150 / SARB42).